A 153-amino-acid chain; its full sequence is MNKFVKSLLVAGSVAALAACSSSNNDAAGNGAAQTFGGYSVADLQQRYNTVYFGFDKYDITGEYVQILDAHAAYLNATPAAKVLVEGNTDERGTPEYNIALGQRRADAVKGYLAGKGVDAGKLGTVSYGEEKPAVLGHDEAAYSKNRRAVLAY.

The signal sequence occupies residues M1–A19. The N-palmitoyl cysteine moiety is linked to residue C20. C20 carries S-diacylglycerol cysteine lipidation. An OmpA-like domain is found at S40–Y153. 2 peptidoglycan binding regions span residues F55–D56 and Y97–L101.

It belongs to the Pal lipoprotein family. The Tol-Pal system is composed of five core proteins: the inner membrane proteins TolA, TolQ and TolR, the periplasmic protein TolB and the outer membrane protein Pal. They form a network linking the inner and outer membranes and the peptidoglycan layer.

It localises to the cell outer membrane. Part of the Tol-Pal system, which plays a role in outer membrane invagination during cell division and is important for maintaining outer membrane integrity. The protein is Peptidoglycan-associated lipoprotein of Haemophilus influenzae (strain ATCC 51907 / DSM 11121 / KW20 / Rd).